The chain runs to 261 residues: tRNA pseudouridine synthase A (261 aa).

The Nucleophile role is filled by Asp-51. Tyr-109 serves as a coordination point for substrate.

This sequence belongs to the tRNA pseudouridine synthase TruA family. In terms of assembly, homodimer.

It carries out the reaction uridine(38/39/40) in tRNA = pseudouridine(38/39/40) in tRNA. Functionally, formation of pseudouridine at positions 38, 39 and 40 in the anticodon stem and loop of transfer RNAs. This is tRNA pseudouridine synthase A from Idiomarina loihiensis (strain ATCC BAA-735 / DSM 15497 / L2-TR).